Consider the following 100-residue polypeptide: Co-chaperonin GroES (100 aa).

Belongs to the GroES chaperonin family. Heptamer of 7 subunits arranged in a ring. Interacts with the chaperonin GroEL.

The protein localises to the cytoplasm. Its function is as follows. Together with the chaperonin GroEL, plays an essential role in assisting protein folding. The GroEL-GroES system forms a nano-cage that allows encapsulation of the non-native substrate proteins and provides a physical environment optimized to promote and accelerate protein folding. GroES binds to the apical surface of the GroEL ring, thereby capping the opening of the GroEL channel. This Nocardia farcinica (strain IFM 10152) protein is Co-chaperonin GroES.